The sequence spans 324 residues: Olfactory receptor 7G2 (324 aa).

The Extracellular segment spans residues 1–25; it reads MEARNQTAISKFLLLGLIEDPELQP. An N-linked (GlcNAc...) asparagine glycan is attached at asparagine 5. The helical transmembrane segment at 26 to 46 threads the bilayer; it reads VLFSLFLSMYLVTILGNLLIL. The Cytoplasmic portion of the chain corresponds to 47 to 54; it reads LAVISDSH. The chain crosses the membrane as a helical span at residues 55–75; it reads LHTPMYFFLSNLSFLDICLST. Residues 76–99 lie on the Extracellular side of the membrane; the sequence is TTIPKMLVNIQAQNRSITYSGCLT. The N-linked (GlcNAc...) asparagine glycan is linked to asparagine 89. Cysteine 97 and cysteine 189 are disulfide-bonded. The helical transmembrane segment at 100–120 threads the bilayer; that stretch reads QICFVLFFAGLENCLLAAMAY. Over 121-139 the chain is Cytoplasmic; that stretch reads DRYVAICHPLRYTVIMNPR. The helical transmembrane segment at 140–160 threads the bilayer; sequence LCGLLILLSLLTSVVNALLLS. At 161–197 the chain is on the extracellular side; it reads LMVLRLSFCTDLEIPLFFCELAQVIQLTCSDTLINNI. Residues 198-217 form a helical membrane-spanning segment; that stretch reads LIYFAACIFGGVPLSGIILS. At 218–237 the chain is on the cytoplasmic side; that stretch reads YTQITSCVLRMPSASGKHKA. Residues 238–258 traverse the membrane as a helical segment; it reads VSTCGSHLSIVLLFYGAGLGV. Residues 259–271 are Extracellular-facing; it reads YISSVVTDSPRKT. The helical transmembrane segment at 272–292 threads the bilayer; the sequence is AVASVMYSVFPQMVNPFIYSL. At 293–324 the chain is on the cytoplasmic side; the sequence is RNKDMKGTLRKFIGRIPSLLWCAICFGFRFLE.

This sequence belongs to the G-protein coupled receptor 1 family.

It is found in the cell membrane. Functionally, odorant receptor. This Homo sapiens (Human) protein is Olfactory receptor 7G2 (OR7G2).